Consider the following 141-residue polypeptide: ATP synthase epsilon chain (141 aa).

The protein belongs to the ATPase epsilon chain family. As to quaternary structure, F-type ATPases have 2 components, CF(1) - the catalytic core - and CF(0) - the membrane proton channel. CF(1) has five subunits: alpha(3), beta(3), gamma(1), delta(1), epsilon(1). CF(0) has three main subunits: a, b and c.

Its subcellular location is the cell inner membrane. Functionally, produces ATP from ADP in the presence of a proton gradient across the membrane. This Desulfatibacillum aliphaticivorans protein is ATP synthase epsilon chain.